The chain runs to 540 residues: Chaperonin GroEL (540 aa).

ATP is bound by residues 29–32 (TIGP), 86–90 (DGTTT), Gly-413, 477–479 (NAA), and Asp-493.

The protein belongs to the chaperonin (HSP60) family. In terms of assembly, forms a cylinder of 14 subunits composed of two heptameric rings stacked back-to-back. Interacts with the co-chaperonin GroES.

The protein localises to the cytoplasm. The catalysed reaction is ATP + H2O + a folded polypeptide = ADP + phosphate + an unfolded polypeptide.. Together with its co-chaperonin GroES, plays an essential role in assisting protein folding. The GroEL-GroES system forms a nano-cage that allows encapsulation of the non-native substrate proteins and provides a physical environment optimized to promote and accelerate protein folding. In Lactobacillus helveticus (strain DPC 4571), this protein is Chaperonin GroEL.